The following is a 1920-amino-acid chain: MSNESSQLAASSRLPTTTNQVKTVITDTPFVSTALEERRSRSLRARPSLSSPSMGIPSTTHPNGHATQSKGMEAISQGLRQEAVIVRREKRITEKERELKEVVESHDGLIREKFHLERFVTLLEGWNPEQAKLDNSPVFLQWKDSKHNLLNLLPDEPAISASSQAGPSRPRSSLPSRTTRRKAHEQSELLAHVVAPVAKPPAFAPSTKGKERVGDELHAKTKGKGKGLAEQSLIPSPAEGALHTKGGKRKVGDVTTDMLPPPVPDKRSRGSRRATMGAPLPQIDQNEEVGLDSQATHGGKAKRRGRISLPDLPTSKKLRTAKRASAVSSESASPVVEAPTLERLASPSPLSTPVPLPTFAHLPFPPAPHRIRKRIVGPRTIRYTDPSQRPPAPKYGGDITPIIESYVNINDTGPPPEMKTLEARAKKEGYLLARVMYLKSHGRLQRLVDEEDGSNLFSTTTTSNSHAKIIRIPPRKTDYHDTLIAHMVQVRNAMLNVAKSKPVTCKKVARMVQAYWENIEGKEERERLAEEKERRRMGKEIIKSLRKRWALAVKVVRAKILEAQKQEQDRLGKEHLQNILQRSTGLLEAQIQGSNDSGEEEGEDSTSDNTDDSEGDDETNTLLPLTSISPEPVIGDDEEDVDVHDDDDEQQGEEDTSHKEDESDASDTESDENSMSEHNQDLRFLISDDVLNEDPMSTGRFAEEDRGSSDTEQLTDNKNDGEEPKETAVQAAFDGSDDVNRLEEPHNPVSSTANIGNFALLESSSAEVSDASCPATMPILVRQSPKTCSQPRTRKVKLSTLSLSSDPDPDINDPEFKARLEDSNQDDQDEELDLEMEEADSAGRESGEGNRDSEDEGLLADADLPIEVLLRRYGYPVPEGEGAVNGEPEQSESKGREQAAPTSTVSETLPSTKLSLAQPANQTDQSLTDTALPEPRVPEQLIISGKRQRRKKEIWTPDDSEPQHLVGKKRIKKVEIVEKVEADVHQNGDGLVIVEEETMGDEDNDDSKVGQEEEDGHEYDSEEEYDEDEDEEEEGAKEDNVDWDDRQDKEGDIGPRVRQPFLLRGTLRPYQQAGLEWLASLWSNNMNGILADEMGLGKTIQTIALLGHLACDKGVWGQHLIIVPTSVILNWEMEFKKFLPGMKVLTYYGNQKERKEKRVGWHTENTWQVCITSYQIVLADQHIFRRKNWCYMILDEAHNIKNFRSQRWQTLLGFKAQRRLLLTGTPLQNNLMELWSLLYFLMPGGIGADATAVVGFANHKEFMEWFSNPMDKAIETGDAMDEETLETVAKLHTLLRPFILRRLKSEVETQLPGKFEHVVYCRLSKRQRFLYDEFMSRASTHEALTTGGYLGVMNTLMQLRKVCNHPDLFEMRPVKTSFAMDNVARDFEPSDILIRKRLLAEEDERRIDALAIGFGVAHNEAMSGWVARARQTYDASDKLPYAASPLRRGKLSAPPPKDTRSVELWLKYRVWAEEEFSKRRWESIRATNRQRCGISPIYGSTFLSLLGNLPNFLLPQDVQSRREETFADFTPPAAKFITSLPERAKSLEDVIDRFAVIPPNAVARNLATYALPGLEPISHPALTDPAFDTLHRSSVKLQIAFPDASLLQYDCGKLQKLFEMLRDLKSEGHRVLIFTQMTRVLDILEMFLSHNGHRYLRLDGSTKIEDRQVLTERFNSDSRIFVFIASSRSGGVGINLTGADTVFFYDSDWNPSMDRQCMDRAHRIGQTREVHIYRFVSSHTVEENMLRKAEQKRLLDKMVIQEGGFNNDWWGRVGWKDMFGDVPGITDVSGVVEKSGEGIIDIQVEGTPVAEDVEVTRPRAGEERELARALAEVEDEEDAQAARMAQGEGELDLQEFEEGPKAVAKRVRVFEPENSGTPVTTEAGETGDVVEEYDDEPGSVEEYMLKWVEEDWDYFSPYRA.

Composition is skewed to polar residues over residues 1–31 (MSNE…TPFV) and 56–68 (IPST…HATQ). 2 disordered regions span residues 1–68 (MSNE…HATQ) and 158–350 (AISA…PSPL). The segment covering 167–177 (PSRPRSSLPSR) has biased composition (low complexity). The span at 208 to 219 (KGKERVGDELHA) shows a compositional bias: basic and acidic residues. The span at 324-339 (ASAVSSESASPVVEAP) shows a compositional bias: low complexity. Residues 467 to 540 (AKIIRIPPRK…EKERRRMGKE (74 aa)) form the HSA domain. Disordered regions lie at residues 590–727 (QIQG…PKET), 783–862 (QSPK…LADA), 876–966 (PVPE…QHLV), and 988–1055 (GDGL…DIGP). Composition is skewed to acidic residues over residues 597-619 (SGEE…DDET), 634-654 (IGDD…QGEE), and 662-674 (ESDA…DENS). Residues 701–726 (FAEEDRGSSDTEQLTDNKNDGEEPKE) show a composition bias toward basic and acidic residues. Acidic residues predominate over residues 823-840 (SNQDDQDEELDLEMEEAD). A compositionally biased stretch (basic and acidic residues) spans 841-852 (SAGRESGEGNRD). Polar residues predominate over residues 900 to 929 (APTSTVSETLPSTKLSLAQPANQTDQSLTD). 2 stretches are compositionally biased toward acidic residues: residues 994-1005 (VEEETMGDEDND) and 1012-1036 (EEED…EEGA). Residues 1037–1055 (KEDNVDWDDRQDKEGDIGP) show a composition bias toward basic and acidic residues. Positions 1079–1244 (ASLWSNNMNG…WSLLYFLMPG (166 aa)) constitute a Helicase ATP-binding domain. 1092-1099 (DEMGLGKT) lines the ATP pocket. A DEAH box motif is present at residues 1195-1198 (DEAH). Residues 1613–1766 (KLQKLFEMLR…KMVIQEGGFN (154 aa)) enclose the Helicase C-terminal domain.

This sequence belongs to the SNF2/RAD54 helicase family. SWR1 subfamily. In terms of assembly, component of the SWR1 chromatin-remodeling complex.

It localises to the nucleus. The catalysed reaction is ATP + H2O = ADP + phosphate + H(+). Catalytic component of the SWR1 complex which mediates the ATP-dependent exchange of histone H2A for the H2A variant HZT1 leading to transcriptional regulation of selected genes by chromatin remodeling. In Cryptococcus neoformans var. neoformans serotype D (strain JEC21 / ATCC MYA-565) (Filobasidiella neoformans), this protein is Helicase SWR1 (SWR1).